Reading from the N-terminus, the 459-residue chain is Putrescine aminotransferase (459 aa).

Residues Gly150 to Thr151 and Gln274 each bind pyridoxal 5'-phosphate. Lys300 carries the post-translational modification N6-(pyridoxal phosphate)lysine. Thr332 contacts pyridoxal 5'-phosphate.

The protein belongs to the class-III pyridoxal-phosphate-dependent aminotransferase family. Putrescine aminotransferase subfamily. Pyridoxal 5'-phosphate is required as a cofactor.

It carries out the reaction an alkane-alpha,omega-diamine + 2-oxoglutarate = an omega-aminoaldehyde + L-glutamate. The enzyme catalyses putrescine + 2-oxoglutarate = 1-pyrroline + L-glutamate + H2O. The catalysed reaction is cadaverine + 2-oxoglutarate = 5-aminopentanal + L-glutamate. The protein operates within amine and polyamine degradation; putrescine degradation; 4-aminobutanal from putrescine (transaminase route): step 1/1. Functionally, catalyzes the aminotransferase reaction from putrescine to 2-oxoglutarate, leading to glutamate and 4-aminobutanal, which spontaneously cyclizes to form 1-pyrroline. This is the first step in one of two pathways for putrescine degradation, where putrescine is converted into 4-aminobutanoate (gamma-aminobutyrate or GABA) via 4-aminobutanal. Also functions as a cadaverine transaminase in a a L-lysine degradation pathway to succinate that proceeds via cadaverine, glutarate and L-2-hydroxyglutarate. This Klebsiella pneumoniae (strain 342) protein is Putrescine aminotransferase.